Reading from the N-terminus, the 100-residue chain is Ubiquitin-related modifier 1 homolog (100 aa).

G100 is subject to 1-thioglycine. G100 is covalently cross-linked (Glycyl lysine isopeptide (Gly-Lys) (interchain with K-? in acceptor proteins)).

It belongs to the URM1 family. Interacts with cer. In terms of processing, C-terminal thiocarboxylation occurs in 2 steps, it is first acyl-adenylated (-COAMP) via the hesA/moeB/thiF part of the MOCS3 homolog, then thiocarboxylated (-COSH) via the rhodanese domain of the MOCS3 homolog.

It localises to the cytoplasm. Its pathway is tRNA modification; 5-methoxycarbonylmethyl-2-thiouridine-tRNA biosynthesis. Acts as a sulfur carrier required for 2-thiolation of mcm(5)S(2)U at tRNA wobble positions of cytosolic tRNA(Lys), tRNA(Glu) and tRNA(Gln). Serves as sulfur donor in tRNA 2-thiolation reaction by being thiocarboxylated (-COSH) at its C-terminus by MOCS3. The sulfur is then transferred to tRNA to form 2-thiolation of mcm(5)S(2)U. Also acts as a ubiquitin-like protein (UBL) that is covalently conjugated via an isopeptide bond to lysine residues of target proteins such as Prx2/Jafrac1, Ciao1, Eip71CD and GILT1. The thiocarboxylated form serves as substrate for conjugation and oxidative stress specifically induces the formation of UBL-protein conjugates. This chain is Ubiquitin-related modifier 1 homolog, found in Drosophila willistoni (Fruit fly).